A 580-amino-acid polypeptide reads, in one-letter code: Proline--tRNA ligase (580 aa).

This sequence belongs to the class-II aminoacyl-tRNA synthetase family. ProS type 1 subfamily. Homodimer.

The protein localises to the cytoplasm. It carries out the reaction tRNA(Pro) + L-proline + ATP = L-prolyl-tRNA(Pro) + AMP + diphosphate. In terms of biological role, catalyzes the attachment of proline to tRNA(Pro) in a two-step reaction: proline is first activated by ATP to form Pro-AMP and then transferred to the acceptor end of tRNA(Pro). As ProRS can inadvertently accommodate and process non-cognate amino acids such as alanine and cysteine, to avoid such errors it has two additional distinct editing activities against alanine. One activity is designated as 'pretransfer' editing and involves the tRNA(Pro)-independent hydrolysis of activated Ala-AMP. The other activity is designated 'posttransfer' editing and involves deacylation of mischarged Ala-tRNA(Pro). The misacylated Cys-tRNA(Pro) is not edited by ProRS. This is Proline--tRNA ligase from Maridesulfovibrio salexigens (strain ATCC 14822 / DSM 2638 / NCIMB 8403 / VKM B-1763) (Desulfovibrio salexigens).